We begin with the raw amino-acid sequence, 448 residues long: Trigger factor (448 aa).

Residues 167-253 (GSIVRVDFVE…VKDIKRRDIP (87 aa)) enclose the PPIase FKBP-type domain.

The protein belongs to the FKBP-type PPIase family. Tig subfamily.

The protein localises to the cytoplasm. The catalysed reaction is [protein]-peptidylproline (omega=180) = [protein]-peptidylproline (omega=0). Its function is as follows. Involved in protein export. Acts as a chaperone by maintaining the newly synthesized protein in an open conformation. Functions as a peptidyl-prolyl cis-trans isomerase. The chain is Trigger factor from Borrelia duttonii (strain Ly).